The sequence spans 232 residues: Multiple organellar RNA editing factor 6, mitochondrial (232 aa).

The transit peptide at 1-67 (MAKTLSRSTA…TIRTRMDRSG (67 aa)) directs the protein to the mitochondrion. The interval 208–232 (TNQRGSDKPKYHDRIRNVRRRENMR) is disordered. The span at 212–232 (GSDKPKYHDRIRNVRRRENMR) shows a compositional bias: basic and acidic residues.

This sequence belongs to the MORF family. As to quaternary structure, heterodimers with MORF8/RIP1, MORF3/RIP3, MORF6/RIP6, MORF7/RIP7 and MORF9/RIP9.

Its subcellular location is the mitochondrion. Its function is as follows. Involved in organellar RNA editing. Required for the processing of few RNA editing sites in mitochondria. This is Multiple organellar RNA editing factor 6, mitochondrial from Arabidopsis thaliana (Mouse-ear cress).